The primary structure comprises 184 residues: Protein PLANT CADMIUM RESISTANCE 5 (184 aa).

Residues 1 to 26 show a composition bias toward polar residues; the sequence is MGRPVGQTNQAQPSVQHTASPSNKVS. Residues 1–33 are disordered; the sequence is MGRPVGQTNQAQPSVQHTASPSNKVSHNGGIGK. A helical membrane pass occupies residues 94-114; it reads AGLLYGALFFTGASFVYSYMF.

It belongs to the cornifelin family.

The protein localises to the membrane. Functionally, may be involved in heavy metals transport. This Arabidopsis thaliana (Mouse-ear cress) protein is Protein PLANT CADMIUM RESISTANCE 5 (PCR5).